We begin with the raw amino-acid sequence, 378 residues long: Erythronate-4-phosphate dehydrogenase (378 aa).

Positions 45 and 66 each coordinate substrate. The NAD(+) site is built by D146 and T175. The active site involves R208. NAD(+) is bound at residue D232. E237 is an active-site residue. The Proton donor role is filled by H254. G257 is a binding site for NAD(+). Y258 provides a ligand contact to substrate.

Belongs to the D-isomer specific 2-hydroxyacid dehydrogenase family. PdxB subfamily. Homodimer.

The protein resides in the cytoplasm. It catalyses the reaction 4-phospho-D-erythronate + NAD(+) = (R)-3-hydroxy-2-oxo-4-phosphooxybutanoate + NADH + H(+). The protein operates within cofactor biosynthesis; pyridoxine 5'-phosphate biosynthesis; pyridoxine 5'-phosphate from D-erythrose 4-phosphate: step 2/5. In terms of biological role, catalyzes the oxidation of erythronate-4-phosphate to 3-hydroxy-2-oxo-4-phosphonooxybutanoate. This Pectobacterium atrosepticum (strain SCRI 1043 / ATCC BAA-672) (Erwinia carotovora subsp. atroseptica) protein is Erythronate-4-phosphate dehydrogenase.